The chain runs to 683 residues: DNA ligase (683 aa).

Residues 29–33, 79–80, and glutamate 109 contribute to the NAD(+) site; these read DAEFD and SL. Lysine 111 serves as the catalytic N6-AMP-lysine intermediate. The NAD(+) site is built by arginine 132, glutamate 172, lysine 288, and lysine 312. Zn(2+) is bound by residues cysteine 406, cysteine 409, cysteine 425, and cysteine 431. Residues 595 to 683 enclose the BRCT domain; it reads SVPRTLAGVT…GPPAEAGEPT (89 aa).

It belongs to the NAD-dependent DNA ligase family. LigA subfamily. Mg(2+) serves as cofactor. The cofactor is Mn(2+).

It catalyses the reaction NAD(+) + (deoxyribonucleotide)n-3'-hydroxyl + 5'-phospho-(deoxyribonucleotide)m = (deoxyribonucleotide)n+m + AMP + beta-nicotinamide D-nucleotide.. Functionally, DNA ligase that catalyzes the formation of phosphodiester linkages between 5'-phosphoryl and 3'-hydroxyl groups in double-stranded DNA using NAD as a coenzyme and as the energy source for the reaction. It is essential for DNA replication and repair of damaged DNA. This is DNA ligase from Mycobacterium ulcerans (strain Agy99).